Consider the following 528-residue polypeptide: UDP-glucuronosyltransferase 2B19 (528 aa).

The N-terminal stretch at 1 to 21 (MSMKWTSALLLIQLSCYLSFG) is a signal peptide. The residue at position 135 (Lys135) is an N6-succinyllysine. Asn315 is a glycosylation site (N-linked (GlcNAc...) asparagine). Residues 493-513 (VIGFLLACVATVIFIITKCLF) traverse the membrane as a helical segment.

The protein belongs to the UDP-glycosyltransferase family. In terms of tissue distribution, expressed in liver, ovary, prostate, colon, kidney, pancreas, brain, cerebellum, mammary gland and epididymis. Not expressed in small intestine, spleen, bladder, adrenal gland and testis.

The protein localises to the microsome membrane. It is found in the endoplasmic reticulum membrane. The enzyme catalyses glucuronate acceptor + UDP-alpha-D-glucuronate = acceptor beta-D-glucuronoside + UDP + H(+). Its function is as follows. UDPGT is of major importance in the conjugation and subsequent elimination of potentially toxic xenobiotics and endogenous compounds. This isozyme displays activity toward several classes of xenobiotic substrates: eugenol, 4-methyllumbelliferone, p-nitrophenol, 1-naphthol, p,p'-biphenol, naringenin and o,o'-biphenol. Active also on 3a-hydroxy and 17b-hydroxy positions of steroids. Functionally, contributes to the formation of androgen glucuronide in extrahepatic steroid target tissues such as the prostate. The polypeptide is UDP-glucuronosyltransferase 2B19 (UGT2B19) (Macaca fascicularis (Crab-eating macaque)).